A 531-amino-acid chain; its full sequence is uncharacterized protein (531 aa).

The signal sequence occupies residues 1-22 (MRLQFKLLGFLTLLGTSTILSA). A lipid anchor (N-palmitoyl cysteine) is attached at Cys-23. A lipid anchor (S-diacylglycerol cysteine) is attached at Cys-23. The tract at residues 31–51 (EPNNIEESGPITPTTPTTDVP) is disordered. Residues 40-51 (PITPTTPTTDVP) are compositionally biased toward low complexity.

The protein belongs to the MG067/MG068/MG395 family.

The protein resides in the cell membrane. This is an uncharacterized protein from Mycoplasma pneumoniae (strain ATCC 29342 / M129 / Subtype 1) (Mycoplasmoides pneumoniae).